Here is a 186-residue protein sequence, read N- to C-terminus: Fucolectin-6 (186 aa).

Positions 1–32 (MKTCNLTDRMKVKMIMLLFQILAISTLQSVSA) are cleaved as a signal peptide. The tract at residues 40–186 (QENVAVRGKA…VEVNAMLPAN (147 aa)) is F5/8 type C-like. Positions 67, 70, 72, and 81 each coordinate Ca(2+). Intrachain disulfides connect Cys-82/Cys-175, Cys-114/Cys-115, and Cys-137/Cys-153. Residues His-84 and Arg-111 each contribute to the alpha-L-fucose site. Residues 111-113 (RGD) carry the Cell attachment site motif. Arg-118 provides a ligand contact to alpha-L-fucose. Ca(2+)-binding residues include Cys-175 and Glu-176.

This sequence belongs to the fucolectin family. As to quaternary structure, homotrimer. Gill mucous cells.

The protein resides in the secreted. Functionally, acts as a defensive agent. Recognizes blood group fucosylated oligosaccharides including A, B, H and Lewis B-type antigens. Does not recognize Lewis A antigen and has low affinity for monovalent haptens. This Anguilla japonica (Japanese eel) protein is Fucolectin-6.